A 308-amino-acid polypeptide reads, in one-letter code: tRNA dimethylallyltransferase (308 aa).

11–18 (GPTGIGKT) contributes to the ATP binding site. Residue 13 to 18 (TGIGKT) participates in substrate binding. An interaction with substrate tRNA region spans residues 36–39 (DSMQ).

Belongs to the IPP transferase family. Monomer. The cofactor is Mg(2+).

It carries out the reaction adenosine(37) in tRNA + dimethylallyl diphosphate = N(6)-dimethylallyladenosine(37) in tRNA + diphosphate. Functionally, catalyzes the transfer of a dimethylallyl group onto the adenine at position 37 in tRNAs that read codons beginning with uridine, leading to the formation of N6-(dimethylallyl)adenosine (i(6)A). This is tRNA dimethylallyltransferase from Lactobacillus gasseri (strain ATCC 33323 / DSM 20243 / BCRC 14619 / CIP 102991 / JCM 1131 / KCTC 3163 / NCIMB 11718 / NCTC 13722 / AM63).